A 300-amino-acid chain; its full sequence is MKIAILSRDGTLYSCKRLREAAIQRGHLVEILDPLSCYMNINPAASSIHYKGRKLPHFDAVIPRIGTAITFYGTAALRQFEMLGSYPLNESVAIARARDKLRSMQLLARQGIDLPVTGIVHSPDDTSDLIDMVGGAPLVVKLVEGTQGIGVVLAETRQAAESVIDAFRGLNAHILVQEYIKEAQGCDIRCLVVGDEVVAAIERRAKEGDFRSNLHRGGAASVASITPQEREIAIKAARTMALDVAGVDILRANRGPLVMEVNASPGLEGIEKTTGIDIAGKMIRWIERYATTEYCLKTGG.

The ATP-grasp domain occupies 104 to 287; the sequence is MQLLARQGID…IAGKMIRWIE (184 aa). ATP contacts are provided by residues K141, 178–179, D187, and 211–213; these read EY and RSN. Residues D248, E260, and N262 each coordinate Mg(2+). Positions 248, 260, and 262 each coordinate Mn(2+).

It belongs to the RimK family. Mg(2+) serves as cofactor. It depends on Mn(2+) as a cofactor.

Its function is as follows. An L-glutamate ligase that catalyzes the ATP-dependent post-translational addition of glutamate residues to the C-terminus of ribosomal protein bS6 (RpsF). Is also able to catalyze the synthesis of poly-alpha-glutamate in vitro, via ATP hydrolysis from unprotected glutamate as substrate. The number of glutamate residues added to either RpsF or to poly-alpha-glutamate changes with pH. This Shigella boydii serotype 4 (strain Sb227) protein is Ribosomal protein bS6--L-glutamate ligase.